The following is a 357-amino-acid chain: Ribonuclease 3 (357 aa).

In terms of domain architecture, RNase III spans 6 to 155 (IKFIQDQIGY…ILGAIALDSN (150 aa)). E45 is a binding site for Mg(2+). Residue D49 is part of the active site. 2 residues coordinate Mg(2+): D141 and E144. E144 is a catalytic residue. DRBM domains are found at residues 198 to 267 (PLHC…YLKD) and 285 to 355 (DSIG…FVLE).

The protein belongs to the ribonuclease III family. Homodimer. Mg(2+) serves as cofactor.

It is found in the cytoplasm. The enzyme catalyses Endonucleolytic cleavage to 5'-phosphomonoester.. Its function is as follows. Digests double-stranded RNA. Involved in the processing of primary rRNA transcript to yield the immediate precursors to the large and small rRNAs (23S and 16S). Processes some mRNAs, and tRNAs when they are encoded in the rRNA operon. Processes pre-crRNA and tracrRNA of type II CRISPR loci if present in the organism. This chain is Ribonuclease 3 (rnc), found in Roseburia hominis (strain DSM 16839 / JCM 17582 / NCIMB 14029 / A2-183).